The chain runs to 67 residues: Kappa-scoloptoxin(04)-Ssd1b (67 aa).

The N-terminal stretch at 1–24 (MKKTCVVSVFLVLLLLKFHDLSMG) is a signal peptide. Positions 25–36 (EEISPLKKVARR) are excised as a propeptide. 2 cysteine pairs are disulfide-bonded: Cys44–Cys55 and Cys49–Cys62.

In terms of tissue distribution, expressed by the venom gland.

The protein localises to the secreted. The chain is Kappa-scoloptoxin(04)-Ssd1b from Scolopendra dehaani (Thai centipede).